A 501-amino-acid chain; its full sequence is ATP synthase subunit alpha (501 aa).

An ATP-binding site is contributed by 169 to 176; the sequence is GDRQTGKT.

The protein belongs to the ATPase alpha/beta chains family. In terms of assembly, F-type ATPases have 2 components, CF(1) - the catalytic core - and CF(0) - the membrane proton channel. CF(1) has five subunits: alpha(3), beta(3), gamma(1), delta(1), epsilon(1). CF(0) has three main subunits: a(1), b(2) and c(9-12). The alpha and beta chains form an alternating ring which encloses part of the gamma chain. CF(1) is attached to CF(0) by a central stalk formed by the gamma and epsilon chains, while a peripheral stalk is formed by the delta and b chains.

The protein localises to the cell inner membrane. The catalysed reaction is ATP + H2O + 4 H(+)(in) = ADP + phosphate + 5 H(+)(out). In terms of biological role, produces ATP from ADP in the presence of a proton gradient across the membrane. The alpha chain is a regulatory subunit. The protein is ATP synthase subunit alpha of Campylobacter jejuni subsp. doylei (strain ATCC BAA-1458 / RM4099 / 269.97).